Consider the following 155-residue polypeptide: Small ribosomal subunit protein uS7cz/uS7cy (155 aa).

The protein belongs to the universal ribosomal protein uS7 family. Part of the 30S ribosomal subunit.

It is found in the plastid. Its subcellular location is the chloroplast. One of the primary rRNA binding proteins, it binds directly to 16S rRNA where it nucleates assembly of the head domain of the 30S subunit. This is Small ribosomal subunit protein uS7cz/uS7cy (rps7-A) from Anthoceros angustus (Hornwort).